The following is a 350-amino-acid chain: MKVLRVNLDEKSYDIVIQKDLKDYFGEYIKTVFDGKKVAIITDDNLNDIYGEAIKKNIENEGFEVEVISVTPGEKSKSFSILPGIYNKLLDFKLTRSDLIIALGGGVVGDLAGFVASTFLRGISFIQIPTSLLAQVDSSVGGKVAVDLERGKNLVGSFYHPQLVLIDPNMLGTLPEKYFNDGLGEVIKYGCIKSKELFEKLEGFKNKEDLKENIGEIIYECCNIKRELVENDEKDLGERMILNFGHTLGHAIEQIYNYETYSHGEAVAIGMNMISKIAEEKDLTKKGTAERIESLLKKYGLNTDVNIEDNGLAREAIKLDKKNLNGNLNVILLKDIGEGYIYNTTVEFFE.

NAD(+)-binding positions include glycine 106–aspartate 110, threonine 130–serine 131, lysine 143, and lysine 152. 3 residues coordinate Zn(2+): glutamate 185, histidine 246, and histidine 263.

Belongs to the sugar phosphate cyclases superfamily. Dehydroquinate synthase family. Co(2+) is required as a cofactor. The cofactor is Zn(2+). Requires NAD(+) as cofactor.

It is found in the cytoplasm. The catalysed reaction is 7-phospho-2-dehydro-3-deoxy-D-arabino-heptonate = 3-dehydroquinate + phosphate. Its pathway is metabolic intermediate biosynthesis; chorismate biosynthesis; chorismate from D-erythrose 4-phosphate and phosphoenolpyruvate: step 2/7. Its function is as follows. Catalyzes the conversion of 3-deoxy-D-arabino-heptulosonate 7-phosphate (DAHP) to dehydroquinate (DHQ). The protein is 3-dehydroquinate synthase of Clostridium perfringens (strain SM101 / Type A).